A 170-amino-acid chain; its full sequence is Adenine phosphoribosyltransferase (170 aa).

It belongs to the purine/pyrimidine phosphoribosyltransferase family. As to quaternary structure, homodimer.

It localises to the cytoplasm. It carries out the reaction AMP + diphosphate = 5-phospho-alpha-D-ribose 1-diphosphate + adenine. It participates in purine metabolism; AMP biosynthesis via salvage pathway; AMP from adenine: step 1/1. In terms of biological role, catalyzes a salvage reaction resulting in the formation of AMP, that is energically less costly than de novo synthesis. This Mycoplasma capricolum subsp. capricolum (strain California kid / ATCC 27343 / NCTC 10154) protein is Adenine phosphoribosyltransferase.